The primary structure comprises 605 residues: UvrABC system protein C (605 aa).

In terms of domain architecture, GIY-YIG spans 14–92; sequence QSCGVYKMVG…IKSLKPLYNI (79 aa). Residues 202-237 enclose the UVR domain; that stretch reads KEVKEQLLFTMRKCSSEENYELAAIYRDRVKFLEQI.

It belongs to the UvrC family. In terms of assembly, interacts with UvrB in an incision complex.

Its subcellular location is the cytoplasm. Functionally, the UvrABC repair system catalyzes the recognition and processing of DNA lesions. UvrC both incises the 5' and 3' sides of the lesion. The N-terminal half is responsible for the 3' incision and the C-terminal half is responsible for the 5' incision. The polypeptide is UvrABC system protein C (Wolbachia sp. subsp. Drosophila simulans (strain wRi)).